The following is a 129-amino-acid chain: Follitropin subunit beta (129 aa).

Residues 1 to 20 (MKTAQFYIFFFCWKAIWCNG) form the signal peptide. Cystine bridges form between cysteine 21/cysteine 69, cysteine 35/cysteine 84, cysteine 38/cysteine 122, cysteine 46/cysteine 100, cysteine 50/cysteine 102, and cysteine 105/cysteine 112. Asparagine 25 and asparagine 42 each carry an N-linked (GlcNAc...) asparagine glycan.

Belongs to the glycoprotein hormones subunit beta family. As to quaternary structure, heterodimer. The active follitropin is a heterodimer composed of an alpha chain/CGA shared with other hormones and a unique beta chain/FSHB shown here.

Its subcellular location is the secreted. Its function is as follows. Together with the alpha chain CGA constitutes follitropin, the follicle-stimulating hormone, and provides its biological specificity to the hormone heterodimer. Binds FSHR, a G protein-coupled receptor, on target cells to activate downstream signaling pathways. Follitropin is involved in follicle development and spermatogenesis in reproductive organs. This Monodelphis domestica (Gray short-tailed opossum) protein is Follitropin subunit beta (FSHB).